The sequence spans 326 residues: AA9 family lytic polysaccharide monooxygenase B (326 aa).

The first 19 residues, 1–19 (MKSFTIAALAALWAQEAAA), serve as a signal peptide directing secretion. Positions 20 and 98 each coordinate Cu(2+). A disulfide bridge links Cys-57 with Cys-192. 2 residues coordinate O2: His-178 and Gln-187. Residue Tyr-189 participates in Cu(2+) binding. Over residues 265–281 (PSATLTQPTSTATATSA) the composition is skewed to low complexity. Residues 265–286 (PSATLTQPTSTATATSAPGGGG) are disordered. The region spanning 289–326 (CTAAKYQQCGGTGYTGCTTCASGSTCSAVSPPYYSQCL) is the CBM1 domain.

It belongs to the polysaccharide monooxygenase AA9 family. The cofactor is Cu(2+).

The protein resides in the secreted. It carries out the reaction [(1-&gt;4)-beta-D-glucosyl]n+m + reduced acceptor + O2 = 4-dehydro-beta-D-glucosyl-[(1-&gt;4)-beta-D-glucosyl]n-1 + [(1-&gt;4)-beta-D-glucosyl]m + acceptor + H2O.. Its function is as follows. Lytic polysaccharide monooxygenase (LPMO) that depolymerizes crystalline and amorphous polysaccharides via the oxidation of scissile alpha- or beta-(1-4)-glycosidic bonds, yielding C1 and C4 oxidation products. Catalysis by LPMOs requires the reduction of the active-site copper from Cu(II) to Cu(I) by a reducing agent and H(2)O(2) or O(2) as a cosubstrate. Shows no activity on wheat arabinoxylan, konjac glucomannan, acetylated spruce galactoglucomannan, or cellopentaose. This chain is AA9 family lytic polysaccharide monooxygenase B, found in Thermothielavioides terrestris (strain ATCC 38088 / NRRL 8126) (Thielavia terrestris).